Consider the following 539-residue polypeptide: Chaperone Ric-8A (539 aa).

The tract at residues 506 to 539 (PMGVTSDGRLGPLDEAAQKMLQRQESSDLDSDSD) is disordered.

Belongs to the synembryn family.

It localises to the cytoplasm. The protein resides in the cell cortex. Functionally, chaperone that specifically binds and folds nascent G alpha proteins prior to G protein heterotrimer formation, promoting their stability and activity: folds GNAI1, GNAO1, GNA13 and GNAQ. Does not fold G(s) G-alpha proteins GNAS nor GNAL. Also acts as a guanine nucleotide exchange factor (GEF) for G alpha proteins by stimulating exchange of bound GDP for free GTP. This Xenopus laevis (African clawed frog) protein is Chaperone Ric-8A (ric8a).